A 155-amino-acid polypeptide reads, in one-letter code: RNA pyrophosphohydrolase (155 aa).

Residues 6-148 (GYRANVAIVL…KQEVYRKALT (143 aa)) form the Nudix hydrolase domain. The Nudix box signature appears at 38-59 (GGVDTGETPLQAMYRELHEEIG).

This sequence belongs to the Nudix hydrolase family. RppH subfamily. A divalent metal cation serves as cofactor.

Its function is as follows. Accelerates the degradation of transcripts by removing pyrophosphate from the 5'-end of triphosphorylated RNA, leading to a more labile monophosphorylated state that can stimulate subsequent ribonuclease cleavage. This is RNA pyrophosphohydrolase from Francisella tularensis subsp. mediasiatica (strain FSC147).